The primary structure comprises 372 residues: uncharacterized protein (372 aa).

This is an uncharacterized protein from Mycobacterium tuberculosis (strain CDC 1551 / Oshkosh).